The chain runs to 214 residues: Ribonuclease HII (214 aa).

An RNase H type-2 domain is found at 26-214; the sequence is EIVCGVDEAG…PVREAFDLIR (189 aa). Residues aspartate 32, glutamate 33, and aspartate 124 each coordinate a divalent metal cation.

Belongs to the RNase HII family. Mn(2+) serves as cofactor. The cofactor is Mg(2+).

The protein localises to the cytoplasm. The enzyme catalyses Endonucleolytic cleavage to 5'-phosphomonoester.. Functionally, endonuclease that specifically degrades the RNA of RNA-DNA hybrids. The chain is Ribonuclease HII from Burkholderia pseudomallei (strain 1710b).